Reading from the N-terminus, the 75-residue chain is Large ribosomal subunit protein bL31 (75 aa).

It belongs to the bacterial ribosomal protein bL31 family. Type A subfamily. As to quaternary structure, part of the 50S ribosomal subunit.

Binds the 23S rRNA. The polypeptide is Large ribosomal subunit protein bL31 (Rhodopseudomonas palustris (strain BisB5)).